The chain runs to 508 residues: O-acetyltransferase pigM (508 aa).

The disordered stretch occupies residues 166–188 (TPAPDERGKISPSLEDAAGSPRT).

It functions in the pathway secondary metabolite biosynthesis. In terms of biological role, O-acetyltransferase; part of the gene cluster that mediates the biosynthesis of azaphilone pigments (MonAzPs), a complex mixture of compounds with a common azaphilone skeleton very widely used as food colorants. PigM and pigO are involved in the elimination of the omega-1 alcohol with pigM acting as an O-acetyltransferase that synthesizes the O-11 acetyl intermediate whereas pigO eliminates acetic acid to yield an intermediate with a C10(11) double bond. The first step of the pathway is performed by the nrPKS pigA that forms the hexaketide precursor from successive condensations of five malonyl-CoA units, with a simple acetyl-CoA starter unit. The role of esterase pigG is not clear, but it may play at most a supplementary role in the formation of the benzaldehyde produced by the pigA nrPKS. This very reactive benzaldehyde is intercepted by the pigC ketoreductase that to provide the first stable enzyme-free MonAzPs intermediate, 6-(4-hydroxy-2-oxopentyl)-3-methyl-2,4-dioxocyclohexane carbaldehyde, also known as M7PKS-1. The FAD-dependent monooxygenase pigN hydroxylates M7PKS-1 at C-4, which triggers the formation of the pyran ring. PigJ, pigK and pigD are involved in the acetylation of the pyran ring. PigJ and pigK form the two subunits of a dedicated fungal FAS that produces the side chain fatty acyl moiety of MonAzPs and pigD transfers the fatty acyl chain to the C-4 alcohol. PigM and pigO are involved in the elimination of the omega-1 alcohol. PigM acts as an O-acetyltransferase that synthesizes the putative O-11 acetyl intermediate whereas pigO eliminates acetic acid to yield an intermediate with a C10(11) double bond. The dehydration of the C-11 alcohol followed by the reduction of the C6(7) double bond by the NAD(P)H-dependent oxidoreductase pigE increases the electrophilicity of the C-5 ketone of the resulting acyl benzopyran. This in turn sets up the C-5 ketone for an intramolecular Knoevenagel aldol condensation with the C-20 enol of the side chain. This condensation affords the characteristic linear tricyclic carbon skeletons of the yellow pigments that serve as the common precursors for the classical yellow pigments monascin and ankaflavin, orange pigments rubopunctatin and monascorubrin, and red pigments ribropunctamine and monascorubramine. The FAD-dependent oxidoreductase pigF is especially invoved in the biosynthesis of orange and red pigments via desaturation of C6(7). The chain is O-acetyltransferase pigM from Monascus ruber (Mold).